A 72-amino-acid chain; its full sequence is Translation initiation factor IF-1 (72 aa).

An S1-like domain is found at 2–72 (AKEDCIEMQG…NKGRIIFRSR (71 aa)).

The protein belongs to the IF-1 family. As to quaternary structure, component of the 30S ribosomal translation pre-initiation complex which assembles on the 30S ribosome in the order IF-2 and IF-3, IF-1 and N-formylmethionyl-tRNA(fMet); mRNA recruitment can occur at any time during PIC assembly.

The protein localises to the cytoplasm. One of the essential components for the initiation of protein synthesis. Stabilizes the binding of IF-2 and IF-3 on the 30S subunit to which N-formylmethionyl-tRNA(fMet) subsequently binds. Helps modulate mRNA selection, yielding the 30S pre-initiation complex (PIC). Upon addition of the 50S ribosomal subunit IF-1, IF-2 and IF-3 are released leaving the mature 70S translation initiation complex. The chain is Translation initiation factor IF-1 from Pasteurella multocida (strain Pm70).